Consider the following 382-residue polypeptide: Ribonuclease D (382 aa).

Residues 4–169 form the 3'-5' exonuclease domain; sequence ITTTAELASV…DVFAALDADL (166 aa). An HRDC domain is found at 208–289; that stretch reads KPKDLAVMME…QRGLARDPRE (82 aa).

The protein belongs to the RNase D family. A divalent metal cation serves as cofactor.

It localises to the cytoplasm. It catalyses the reaction Exonucleolytic cleavage that removes extra residues from the 3'-terminus of tRNA to produce 5'-mononucleotides.. Its function is as follows. Exonuclease involved in the 3' processing of various precursor tRNAs. Initiates hydrolysis at the 3'-terminus of an RNA molecule and releases 5'-mononucleotides. The polypeptide is Ribonuclease D (Nitrobacter hamburgensis (strain DSM 10229 / NCIMB 13809 / X14)).